The primary structure comprises 818 residues: MIDDILDKMTLEEQVSLLSGADFWTTVAIERLGVPKIKVTDGPNGARGGGSLVGGVKSACFPVAIALGATWDPELIERAGVALGGQAKSKGASVLLAPTVNIHRSGLNGRNFECYSEDPALTAACAVAYINGVQSQGVAATIKHFVANESEIERQTMSSDVDERTLREIYLPPFEEAVKKAGVKAVMSSYNKLNGTYTSENPWLLTKVLREEWGFDGVVMSDWFGSHSTAETINAGLDLEMPGPWRDRGEKLVAAVREGKVKAETVRASARRILLLLERVGAFEKAPDLAEHALDLPEDRALIRQLGAEGAVLLKNDGVLPLAKSSFDQIAVIGPNAASARVMGGGSARIAAHYTVSPLEGIRAALSNANSLRHAVGCNNNRLIDVFSGEMTVEYFKGRGFESRPVHVETVEKGEFFWFDLPSGDLDLADFSARMTATFVPQETGEHIFGMTNAGLARLFVDGELVVDGYDGWTKGENFFGTANSEQRRAVTLGAARRYRVVVEYEAPKASLDGINICALRFGVEKPLGDAGIAEAVETARKSDIVLLLVGREGEWDTEGLDLPDMRLPGRQEELIEAVAETNPNVVVVLQTGGPIEMPWLGKVRAVLQMWYPGQELGNALADVLFGDVEPAGRLPQTFPKALTDNSAITDDPSIYPGQDGHVRYAEGIFVGYRHHDTREIEPLFPFGFGLGYTRFTWGAPQLSGTEMGADGLTVTVDVTNIGDRAGSDVVQLYVHSPNARVERPFKELRAFAKLKLAPGATGTAVLKIAPRDLAYFDVEAGRFRADAGKYELIVAASAIDIRASVSIHLPVDHVMEP.

Asp222 is an active-site residue. Residues 386-538 (VFSGEMTVEY…GDAGIAEAVE (153 aa)) enclose the PA14 domain.

It belongs to the glycosyl hydrolase 3 family.

It localises to the cytoplasm. The catalysed reaction is Hydrolysis of terminal, non-reducing beta-D-glucosyl residues with release of beta-D-glucose.. Its function is as follows. Involved in modifying a vir-inducing plant signal molecule. Hydrolyzes coniferin but not cellobiose. This chain is Beta-glucosidase (cbg-1), found in Rhizobium radiobacter (Agrobacterium tumefaciens).